A 2055-amino-acid polypeptide reads, in one-letter code: Citron rho-interacting kinase (2055 aa).

Residues 97 to 359 (FEVRSLVGCG…FEGLCCHPFF (263 aa)) enclose the Protein kinase domain. ATP-binding positions include 103–111 (VGCGHFAEV) and Lys126. The active-site Proton acceptor is Asp221. The region spanning 360-430 (ARTDWNNIRN…SKALGYLGRS (71 aa)) is the AGC-kinase C-terminal domain. Residues 375-398 (VPTLKSDDDTSNFDEPEKNSWVSS) form a disordered region. Coiled coils occupy residues 457-747 (LQDS…AQVS), 773-1238 (IKKD…LEYQ), and 1284-1318 (YNEL…AREE). Residues 1349–1376 (PEHQPSAMSLLAPPSSRRKEASTPEEFS) form a disordered region. Positions 1353–1363 (PSAMSLLAPPS) are enriched in low complexity. Residues 1365-1376 (RRKEASTPEEFS) show a composition bias toward basic and acidic residues. The Phorbol-ester/DAG-type zinc finger occupies 1388–1437 (PHRFNVGLNMRATKCAVCLDTVHFGRQASKCLECQVMCHPKCSTCLPATC). A PH domain is found at 1469–1589 (SLHLEGWMKV…WVTALESVVA (121 aa)). The CNH domain maps to 1617-1907 (RLDMNCTLPF…RYLGPAISSG (291 aa)). A disordered region spans residues 1932 to 2040 (SGTEQHRVPS…RGRLPAGAVR (109 aa)). Residues 1939–1948 (VPSTSRSSPN) are compositionally biased toward polar residues. The segment covering 1974-2031 (SHPREPSTPHRYRDREGRTELRRDKSPGRPLEREKSPGRMLSTRRERSPGRLFEDSSR) has biased composition (basic and acidic residues).

This sequence belongs to the protein kinase superfamily. AGC Ser/Thr protein kinase family. As to quaternary structure, homodimer. Directly interacts with KIF14 depending on the activation state (stronger interaction with the kinase-dead form). Interacts with TTC3.

The protein localises to the cytoplasm. It carries out the reaction L-seryl-[protein] + ATP = O-phospho-L-seryl-[protein] + ADP + H(+). The enzyme catalyses L-threonyl-[protein] + ATP = O-phospho-L-threonyl-[protein] + ADP + H(+). Plays a role in cytokinesis. Required for KIF14 localization to the central spindle and midbody. Putative RHO/RAC effector that binds to the GTP-bound forms of RHO and RAC1. It probably binds p21 with a tighter specificity in vivo. Displays serine/threonine protein kinase activity. Plays an important role in the regulation of cytokinesis and the development of the central nervous system. Phosphorylates MYL9/MLC2. The protein is Citron rho-interacting kinase of Rattus norvegicus (Rat).